A 188-amino-acid chain; its full sequence is Putative adenylate kinase (188 aa).

5 residues coordinate ATP: G10, G12, K13, S14, and T15. Residues 30 to 53 (HVSSFLIQNKAFSEYDELRQSYVI) form an NMP region. The interval 103–113 (RRGWGELKIAE) is LID. Residues R104 and K142 each coordinate ATP.

The protein belongs to the adenylate kinase family. AK6 subfamily. In terms of assembly, interacts with uS11. Not a structural component of 40S pre-ribosomes, but transiently interacts with them by binding to uS11.

The enzyme catalyses AMP + ATP = 2 ADP. The catalysed reaction is ATP + H2O = ADP + phosphate + H(+). Functionally, broad-specificity nucleoside monophosphate (NMP) kinase that catalyzes the reversible transfer of the terminal phosphate group between nucleoside triphosphates and monophosphates. Also has ATPase activity. Involved in the late maturation steps of the 30S ribosomal particles, specifically 16S rRNA maturation. While NMP activity is not required for ribosome maturation, ATPase activity is. Associates transiently with small ribosomal subunit protein uS11. ATP hydrolysis breaks the interaction with uS11. May temporarily remove uS11 from the ribosome to enable a conformational change of the ribosomal RNA that is needed for the final maturation step of the small ribosomal subunit. The sequence is that of Putative adenylate kinase from Sulfurisphaera tokodaii (strain DSM 16993 / JCM 10545 / NBRC 100140 / 7) (Sulfolobus tokodaii).